Reading from the N-terminus, the 389-residue chain is Xylose isomerase (389 aa).

Residues H101 and D104 contribute to the active site. Residues E232, E268, H271, D296, D307, and D309 each contribute to the Mg(2+) site.

Belongs to the xylose isomerase family. In terms of assembly, homotetramer. Mg(2+) is required as a cofactor.

It is found in the cytoplasm. It catalyses the reaction alpha-D-xylose = alpha-D-xylulofuranose. This chain is Xylose isomerase, found in Lactococcus lactis subsp. cremoris (strain SK11).